The chain runs to 742 residues: Ion-translocating oxidoreductase complex subunit C (742 aa).

2 4Fe-4S ferredoxin-type domains span residues 369–397 (GEPQ…QQLY) and 407–436 (KATT…VQYF). Cys-377, Cys-380, Cys-383, Cys-387, Cys-416, Cys-419, Cys-422, and Cys-426 together coordinate [4Fe-4S] cluster. Positions 602–719 (KLEQQQANAE…PEEQVDPRKA (118 aa)) are disordered.

This sequence belongs to the 4Fe4S bacterial-type ferredoxin family. RnfC subfamily. In terms of assembly, the complex is composed of six subunits: RsxA, RsxB, RsxC, RsxD, RsxE and RsxG. [4Fe-4S] cluster is required as a cofactor.

It localises to the cell inner membrane. In terms of biological role, part of a membrane-bound complex that couples electron transfer with translocation of ions across the membrane. Required to maintain the reduced state of SoxR. The protein is Ion-translocating oxidoreductase complex subunit C of Escherichia coli O6:H1 (strain CFT073 / ATCC 700928 / UPEC).